The primary structure comprises 1506 residues: DDB1- and CUL4-associated factor 1 (1506 aa).

The interval 141–499 (QPLRTYSTGL…STLEILNLED (359 aa)) is protein kinase-like. Residues Ser-202 and Ser-254 each carry the phosphoserine modification. Positions 241-275 (RLDSSHKTSSRVNSATKPEEGGLKKNKSAKHGDRE) are disordered. Residues 561-592 (SYTHEQIVEMMEFLIEYGPAQLYWEPAEVFLK) form the Chromo domain. An N6-acetyllysine modification is found at Lys-700. Ser-827 carries the phosphoserine modification. A LisH domain is found at 845–877 (PEKELLLLIRNHLISKGLGETATVLTREADLPM). Thr-887 is modified (phosphothreonine). A phosphoserine mark is found at Ser-894 and Ser-897. Disordered regions lie at residues 916–946 (ATVG…GPSY) and 977–999 (KSDH…HLPS). A compositionally biased stretch (pro residues) spans 924–943 (SAPPAHPPPRPPQGSLPLPG). Ser-978 and Ser-999 each carry phosphoserine. WD repeat units lie at residues 1090–1129 (EDES…EEAS), 1132–1173 (CHNS…DMKH), 1175–1212 (FTED…KLLT), 1214–1246 (FNPD…WDVR), and 1247–1289 (SAQA…LLHT). Positions 1090 to 1289 (EDESGFTCCA…DLRTFHLLHT (200 aa)) are WD repeat-like region. 2 short sequence motifs (DWD box) span residues 1241-1248 (VLWDVRSA) and 1277-1284 (EIWDLRTF). Phosphoserine is present on Ser-1327. Positions 1392–1506 (RLAEDEDEEE…EDDIILSLNE (115 aa)) are disordered. Composition is skewed to acidic residues over residues 1395–1482 (EDED…EEVE) and 1489–1500 (DSSDNSDLEDDI). The interaction with NF2 stretch occupies residues 1417-1506 (DDDTDDLDEL…EDDIILSLNE (90 aa)).

Belongs to the VPRBP/DCAF1 family. Component of the DCX (DDB1-CUL4-X-box) E3 ubiquitin-protein ligase complex, named CUL4A-RBX1-DDB1-DCAF1/VPRBP complex. Interacts with DDB1; the interaction is direct. Also forms a ternary complex with DDA1 and DDB1. Interacts with NF2 (via FERM domain). Component of the EDVP complex, a E3 ligase complex containing DYRK2, EDD/UBR5, DDB1 and DCAF1. Interacts with DYRK2; the interaction is direct. Interacts with RAG1; the interaction is direct. Interacts with LLGL1 and LLGL2. Interacts with histone H3. Interacts with ESR1 and LATS1; probably recruited by LATS1 to promote ESR1 ubiquitination and ubiquitin-mediated proteasomal degradation. Directly interacts with TET1, TET2 and TET3 (via C-terminus). Interacts with CEP78; promoting DCAF1 localization to centrosomes. As to expression, widely expressed. Expressed in oocytes and zygotes (at protein level).

Its subcellular location is the cytoplasm. It localises to the nucleus. The protein localises to the cytoskeleton. The protein resides in the microtubule organizing center. It is found in the centrosome. The catalysed reaction is L-seryl-[protein] + ATP = O-phospho-L-seryl-[protein] + ADP + H(+). The enzyme catalyses L-threonyl-[protein] + ATP = O-phospho-L-threonyl-[protein] + ADP + H(+). It functions in the pathway protein modification; protein ubiquitination. Acts both as a substrate recognition component of E3 ubiquitin-protein ligase complexes and as an atypical serine/threonine-protein kinase, playing key roles in various processes such as cell cycle, telomerase regulation and histone modification. Probable substrate-specific adapter of a DCX (DDB1-CUL4-X-box) E3 ubiquitin-protein ligase complex, named CUL4A-RBX1-DDB1-DCAF1/VPRBP complex, which mediates ubiquitination and proteasome-dependent degradation of proteins such as NF2. Involved in the turnover of methylated proteins: recognizes and binds methylated proteins via its chromo domain, leading to ubiquitination of target proteins by the RBX1-DDB1-DCAF1/VPRBP complex. The CUL4A-RBX1-DDB1-DCAF1/VPRBP complex is also involved in B-cell development: DCAF1 is recruited by RAG1 to ubiquitinate proteins, leading to limit error-prone repair during V(D)J recombination. Also part of the EDVP complex, an E3 ligase complex that mediates ubiquitination of proteins such as TERT, leading to TERT degradation and telomerase inhibition. The EDVP complex also mediates ubiquitination and degradation of CCP110. Also acts as an atypical serine/threonine-protein kinase that specifically mediates phosphorylation of 'Thr-120' of histone H2A (H2AT120ph) in a nucleosomal context, thereby repressing transcription. H2AT120ph is present in the regulatory region of many tumor suppresor genes, down-regulates their transcription and is present at high level in a number of tumors. Involved in JNK-mediated apoptosis during cell competition process via its interaction with LLGL1 and LLGL2. By acting on TET dioxygenses, essential for oocyte maintenance at the primordial follicle stage, hence essential for female fertility. In Mus musculus (Mouse), this protein is DDB1- and CUL4-associated factor 1.